We begin with the raw amino-acid sequence, 92 residues long: Small ribosomal subunit protein bS20 (92 aa).

The segment at 1–28 is disordered; sequence MANTASAEKRNRQAQKRRARNVQVRTGV.

It belongs to the bacterial ribosomal protein bS20 family.

Binds directly to 16S ribosomal RNA. The sequence is that of Small ribosomal subunit protein bS20 from Anaeromyxobacter dehalogenans (strain 2CP-C).